An 88-amino-acid polypeptide reads, in one-letter code: PTS system cellobiose-specific EIIB component (88 aa).

In terms of domain architecture, PTS EIIB type-3 spans 3-88; it reads KKRIYLFCSA…IDTLLYGKVD (86 aa). Cys10 serves as the catalytic Phosphocysteine intermediate. Phosphocysteine; by EIIA is present on Cys10.

It localises to the cytoplasm. The catalysed reaction is D-cellobiose(out) + N(pros)-phospho-L-histidyl-[protein] = 6-phospho-beta-D-glucosyl-(1-&gt;4)-D-glucose(in) + L-histidyl-[protein]. Its function is as follows. The phosphoenolpyruvate-dependent sugar phosphotransferase system (sugar PTS), a major carbohydrate active transport system, catalyzes the phosphorylation of incoming sugar substrates concomitantly with their translocation across the cell membrane. The enzyme II CelABD PTS system is involved in cellobiose transport. The polypeptide is PTS system cellobiose-specific EIIB component (Aeromonas hydrophila).